The primary structure comprises 50 residues: Defensin-like protein 1 (50 aa).

4 disulfide bridges follow: Cys2-Cys50, Cys14-Cys35, Cys20-Cys44, and Cys24-Cys46.

The protein belongs to the DEFL family.

It is found in the secreted. Possesses antimicrobial activity sensitive to inorganic cations. Binds specifically to the fungal plasma membrane. Has no inhibitory effect on insect gut alpha-amylase. The polypeptide is Defensin-like protein 1 (Aesculus hippocastanum (Horse chestnut)).